A 93-amino-acid polypeptide reads, in one-letter code: Large ribosomal subunit protein uL23 (93 aa).

This sequence belongs to the universal ribosomal protein uL23 family. In terms of assembly, part of the 50S ribosomal subunit. Contacts protein L29, and trigger factor when it is bound to the ribosome.

Functionally, one of the early assembly proteins it binds 23S rRNA. One of the proteins that surrounds the polypeptide exit tunnel on the outside of the ribosome. Forms the main docking site for trigger factor binding to the ribosome. This chain is Large ribosomal subunit protein uL23, found in Campylobacter jejuni subsp. jejuni serotype O:2 (strain ATCC 700819 / NCTC 11168).